A 38-amino-acid chain; its full sequence is Large ribosomal subunit protein bL36 (38 aa).

This sequence belongs to the bacterial ribosomal protein bL36 family.

This is Large ribosomal subunit protein bL36 from Pelodictyon phaeoclathratiforme (strain DSM 5477 / BU-1).